We begin with the raw amino-acid sequence, 127 residues long: Small ribosomal subunit protein bS16 (127 aa).

The interval 80–127 (GLKKRPTRNNPHKGEPGKKAQERIAAAKQAAEEAAAAKTESAPISEEV) is disordered. Positions 81–90 (LKKRPTRNNP) are enriched in basic residues. Basic and acidic residues predominate over residues 91–101 (HKGEPGKKAQE). Low complexity predominate over residues 102-121 (RIAAAKQAAEEAAAAKTESA).

Belongs to the bacterial ribosomal protein bS16 family.

This is Small ribosomal subunit protein bS16 from Bartonella henselae (strain ATCC 49882 / DSM 28221 / CCUG 30454 / Houston 1) (Rochalimaea henselae).